The sequence spans 247 residues: Probable chemoreceptor glutamine deamidase CheD (247 aa).

The segment at 204–247 (KRPAAPQPARPRIELFGGRGTAPGAGSPSAGSPYAANLSRKQEA) is disordered. Positions 227-239 (GAGSPSAGSPYAA) are enriched in low complexity.

It belongs to the CheD family.

The catalysed reaction is L-glutaminyl-[protein] + H2O = L-glutamyl-[protein] + NH4(+). Functionally, probably deamidates glutamine residues to glutamate on methyl-accepting chemotaxis receptors (MCPs), playing an important role in chemotaxis. This is Probable chemoreceptor glutamine deamidase CheD from Burkholderia orbicola (strain AU 1054).